The primary structure comprises 365 residues: Hematopoietic SH2 domain-containing protein homolog (365 aa).

The region spanning 34–125 (WFHGIISRKA…PYNELLTVAC (92 aa)) is the SH2 domain. Disordered regions lie at residues 199–278 (QSTD…QQKP) and 335–365 (AEHP…APGY). A compositionally biased stretch (polar residues) spans 257 to 277 (QQITPNTPNEGRTQQKNQQQK).

May be an adapter protein involved in tyrosine kinase signaling. This is Hematopoietic SH2 domain-containing protein homolog (hsh2d) from Danio rerio (Zebrafish).